Consider the following 367-residue polypeptide: Protein NDRG4-B (367 aa).

Basic and acidic residues predominate over residues 1–12 (MSELRFPEEKPL). Disordered regions lie at residues 1-21 (MSEL…TEME) and 333-367 (LTSA…EVSC). The segment covering 347–367 (CTQSESSDGIGQINHTMEVSC) has biased composition (polar residues).

It belongs to the NDRG family.

The protein localises to the cytoplasm. It is found in the cytosol. Its function is as follows. Contributes to the maintenance of intracerebral BDNF levels within the normal range. May enhance growth factor-induced ERK1 and ERK2 phosphorylation. May attenuate growth factor-promoted ELK1 phosphorylation in a microtubule-dependent manner. The chain is Protein NDRG4-B (ndrg4-b) from Xenopus laevis (African clawed frog).